We begin with the raw amino-acid sequence, 151 residues long: Large ribosomal subunit protein bL9 (151 aa).

Belongs to the bacterial ribosomal protein bL9 family.

In terms of biological role, binds to the 23S rRNA. In Lactobacillus delbrueckii subsp. bulgaricus (strain ATCC BAA-365 / Lb-18), this protein is Large ribosomal subunit protein bL9.